The primary structure comprises 678 residues: UvrABC system protein B (678 aa).

The region spanning 31-417 (EGLENGLAHQ…KSGGEIIDQV (387 aa)) is the Helicase ATP-binding domain. Residue 44 to 51 (GVTGSGKT) participates in ATP binding. The Beta-hairpin motif lies at 97–120 (YYDYYQPEAYVPSSDTFIEKDASI). Residues 436 to 589 (QVDDLLSEAR…QMKYNEARGI (154 aa)) enclose the Helicase C-terminal domain. The 36-residue stretch at 638–673 (QQQIKKLEQQMYKYAQDLEFEKAAAVRDQLQQLREH) folds into the UVR domain.

It belongs to the UvrB family. Forms a heterotetramer with UvrA during the search for lesions. Interacts with UvrC in an incision complex.

The protein localises to the cytoplasm. Functionally, the UvrABC repair system catalyzes the recognition and processing of DNA lesions. A damage recognition complex composed of 2 UvrA and 2 UvrB subunits scans DNA for abnormalities. Upon binding of the UvrA(2)B(2) complex to a putative damaged site, the DNA wraps around one UvrB monomer. DNA wrap is dependent on ATP binding by UvrB and probably causes local melting of the DNA helix, facilitating insertion of UvrB beta-hairpin between the DNA strands. Then UvrB probes one DNA strand for the presence of a lesion. If a lesion is found the UvrA subunits dissociate and the UvrB-DNA preincision complex is formed. This complex is subsequently bound by UvrC and the second UvrB is released. If no lesion is found, the DNA wraps around the other UvrB subunit that will check the other stand for damage. In Pasteurella multocida (strain Pm70), this protein is UvrABC system protein B.